The following is a 513-amino-acid chain: Probable mannosyl-oligosaccharide alpha-1,2-mannosidase 1B (513 aa).

The first 21 residues, 1–21, serve as a signal peptide directing secretion; that stretch reads MHLSSLSLSLTALAIVSPSAA. Asn-97, Asn-117, Asn-184, Asn-251, Asn-322, Asn-348, and Asn-368 each carry an N-linked (GlcNAc...) asparagine glycan. Cys-334 and Cys-363 are joined by a disulfide. Glu-377 serves as the catalytic Proton donor. Ca(2+) is bound at residue Thr-503.

This sequence belongs to the glycosyl hydrolase 47 family. In terms of assembly, monomer. Ca(2+) serves as cofactor. Requires Mg(2+) as cofactor.

The protein resides in the cytoplasmic vesicle lumen. It carries out the reaction N(4)-(alpha-D-Man-(1-&gt;2)-alpha-D-Man-(1-&gt;2)-alpha-D-Man-(1-&gt;3)-[alpha-D-Man-(1-&gt;2)-alpha-D-Man-(1-&gt;3)-[alpha-D-Man-(1-&gt;2)-alpha-D-Man-(1-&gt;6)]-alpha-D-Man-(1-&gt;6)]-beta-D-Man-(1-&gt;4)-beta-D-GlcNAc-(1-&gt;4)-beta-D-GlcNAc)-L-asparaginyl-[protein] (N-glucan mannose isomer 9A1,2,3B1,2,3) + 4 H2O = N(4)-(alpha-D-Man-(1-&gt;3)-[alpha-D-Man-(1-&gt;3)-[alpha-D-Man-(1-&gt;6)]-alpha-D-Man-(1-&gt;6)]-beta-D-Man-(1-&gt;4)-beta-D-GlcNAc-(1-&gt;4)-beta-D-GlcNAc)-L-asparaginyl-[protein] (N-glucan mannose isomer 5A1,2) + 4 beta-D-mannose. The catalysed reaction is N(4)-(alpha-D-Man-(1-&gt;2)-alpha-D-Man-(1-&gt;2)-alpha-D-Man-(1-&gt;3)-[alpha-D-Man-(1-&gt;3)-[alpha-D-Man-(1-&gt;2)-alpha-D-Man-(1-&gt;6)]-alpha-D-Man-(1-&gt;6)]-beta-D-Man-(1-&gt;4)-beta-D-GlcNAc-(1-&gt;4)-beta-D-GlcNAc)-L-asparaginyl-[protein] (N-glucan mannose isomer 8A1,2,3B1,3) + 3 H2O = N(4)-(alpha-D-Man-(1-&gt;3)-[alpha-D-Man-(1-&gt;3)-[alpha-D-Man-(1-&gt;6)]-alpha-D-Man-(1-&gt;6)]-beta-D-Man-(1-&gt;4)-beta-D-GlcNAc-(1-&gt;4)-beta-D-GlcNAc)-L-asparaginyl-[protein] (N-glucan mannose isomer 5A1,2) + 3 beta-D-mannose. It functions in the pathway protein modification; protein glycosylation. Functionally, involved in the maturation of Asn-linked oligosaccharides. Progressively trims alpha-1,2-linked mannose residues from Man(9)GlcNAc(2) to produce Man(5)GlcNAc(2). In Aspergillus niger (strain ATCC MYA-4892 / CBS 513.88 / FGSC A1513), this protein is Probable mannosyl-oligosaccharide alpha-1,2-mannosidase 1B (mns1B).